Reading from the N-terminus, the 124-residue chain is Anamorsin homolog (124 aa).

The segment covering 1–20 (MSSPAPSTSHNAANSTQAFS) has biased composition (polar residues). Disordered stretches follow at residues 1–39 (MSSP…EDRE) and 40–124 (AKST…TDDI). Residues C49, C56, C59, and C61 each contribute to the [2Fe-2S] cluster site. The tract at residues 49–61 (CATRRRACKNCTC) is fe-S binding site A. [4Fe-4S] cluster contacts are provided by C86, C89, C97, and C100. 2 consecutive short sequence motifs (cx2C motif) follow at residues 86-89 (CGNC) and 97-100 (CAGC). Residues 86–100 (CGNCAKGDAFRCAGC) are fe-S binding site B.

Belongs to the anamorsin family. In terms of assembly, monomer. The cofactor is [2Fe-2S] cluster. [4Fe-4S] cluster serves as cofactor.

It is found in the cytoplasm. It localises to the mitochondrion intermembrane space. Component of the cytosolic iron-sulfur (Fe-S) protein assembly (CIA) machinery. Required for the maturation of extramitochondrial Fe-S proteins. Part of an electron transfer chain functioning in an early step of cytosolic Fe-S biogenesis, facilitating the de novo assembly of a [4Fe-4S] cluster on the cytosolic Fe-S scaffold complex. Electrons are transferred from NADPH via a FAD- and FMN-containing diflavin oxidoreductase. Together with the diflavin oxidoreductase, also required for the assembly of the diferric tyrosyl radical cofactor of ribonucleotide reductase (RNR), probably by providing electrons for reduction during radical cofactor maturation in the catalytic small subunit. In Trypanosoma brucei brucei (strain 927/4 GUTat10.1), this protein is Anamorsin homolog.